We begin with the raw amino-acid sequence, 285 residues long: MLYLTKISNAGSEFTENEQKIADFLQANVSELQSVSSRQMAKQLGISQSSIVKFAQKLGAQGFTELRMALIGEYSASREKTNTTALHLHSSITSDDSLEVIARKLNREKELALEQTCALFDYARLQKIIEVISKAPFIQITGLGGSALVGRDLSFKLMKIGYRVACEADTHVQATVSQALKKGDVQIAISYSGSKKEIVLCAEAARKQGATVIAITSLADSPLRRLAHFTLDTVSGETEWRSSSMSTRTAQNSVTDLLFVGLVQLNDVASLKMIQRSSELTQRLK.

Residues 1 to 77 form the HTH rpiR-type domain; that stretch reads MLYLTKISNA…MALIGEYSAS (77 aa). A DNA-binding region (H-T-H motif) is located at residues 37-56; it reads SRQMAKQLGISQSSIVKFAQ. The SIS domain occupies 128–279; it reads IIEVISKAPF…SLKMIQRSSE (152 aa).

Homotetramer.

Its pathway is amino-sugar metabolism; N-acetylmuramate degradation [regulation]. Functionally, represses the expression of the murPQ operon involved in the uptake and degradation of N-acetylmuramic acid (MurNAc). Binds to two adjacent inverted repeats within the operator region. MurNAc 6-phosphate, the substrate of MurQ, is the specific inducer that weakens binding of MurR to the operator. This chain is HTH-type transcriptional regulator MurR, found in Shigella boydii serotype 18 (strain CDC 3083-94 / BS512).